A 526-amino-acid polypeptide reads, in one-letter code: GMP synthase [glutamine-hydrolyzing] (526 aa).

The Glutamine amidotransferase type-1 domain occupies 9–208 (RILILDFGSQ…VKDICGCECL (200 aa)). Cysteine 86 serves as the catalytic Nucleophile. Catalysis depends on residues histidine 182 and glutamate 184. The GMPS ATP-PPase domain maps to 209–401 (WTPATIIDDA…LGLPYDMLYR (193 aa)). 236 to 242 (SGGVDSS) is an ATP binding site.

As to quaternary structure, homodimer.

The enzyme catalyses XMP + L-glutamine + ATP + H2O = GMP + L-glutamate + AMP + diphosphate + 2 H(+). It functions in the pathway purine metabolism; GMP biosynthesis; GMP from XMP (L-Gln route): step 1/1. Its function is as follows. Catalyzes the synthesis of GMP from XMP. The polypeptide is GMP synthase [glutamine-hydrolyzing] (Aeromonas salmonicida (strain A449)).